The chain runs to 379 residues: Chaperone protein DnaJ (379 aa).

In terms of domain architecture, J spans 5–70 (DYYEVLGVGK…EKKAAYDQYG (66 aa)). A CR-type zinc finger spans residues 139 to 217 (GHEAQIRVPH…CHGQGKLKSQ (79 aa)). Residues Cys152, Cys155, Cys169, Cys172, Cys191, Cys194, Cys205, and Cys208 each coordinate Zn(2+). CXXCXGXG motif repeat units lie at residues 152–159 (CEHCHGNG), 169–176 (CPTCNGVG), 191–198 (CPKCHGSG), and 205–212 (CTKCHGQG).

Belongs to the DnaJ family. In terms of assembly, homodimer. Zn(2+) is required as a cofactor.

The protein localises to the cytoplasm. Its function is as follows. Participates actively in the response to hyperosmotic and heat shock by preventing the aggregation of stress-denatured proteins and by disaggregating proteins, also in an autonomous, DnaK-independent fashion. Unfolded proteins bind initially to DnaJ; upon interaction with the DnaJ-bound protein, DnaK hydrolyzes its bound ATP, resulting in the formation of a stable complex. GrpE releases ADP from DnaK; ATP binding to DnaK triggers the release of the substrate protein, thus completing the reaction cycle. Several rounds of ATP-dependent interactions between DnaJ, DnaK and GrpE are required for fully efficient folding. Also involved, together with DnaK and GrpE, in the DNA replication of plasmids through activation of initiation proteins. The chain is Chaperone protein DnaJ from Cupriavidus metallidurans (strain ATCC 43123 / DSM 2839 / NBRC 102507 / CH34) (Ralstonia metallidurans).